A 299-amino-acid chain; its full sequence is Acetylglutamate kinase (299 aa).

Residues 64-65, R86, and N197 each bind substrate; that span reads GG.

The protein belongs to the acetylglutamate kinase family. ArgB subfamily.

It is found in the cytoplasm. It carries out the reaction N-acetyl-L-glutamate + ATP = N-acetyl-L-glutamyl 5-phosphate + ADP. The protein operates within amino-acid biosynthesis; L-arginine biosynthesis; N(2)-acetyl-L-ornithine from L-glutamate: step 2/4. Catalyzes the ATP-dependent phosphorylation of N-acetyl-L-glutamate. The protein is Acetylglutamate kinase of Persephonella marina (strain DSM 14350 / EX-H1).